Here is a 330-residue protein sequence, read N- to C-terminus: Serine/threonine-protein phosphatase PP1-alpha catalytic subunit (330 aa).

An N-acetylserine modification is found at Ser-2. Ser-2 and Ser-22 each carry phosphoserine. Residues Asp-64, His-66, Asp-92, and Asn-124 each contribute to the Mn(2+) site. His-125 acts as the Proton donor in catalysis. The Mn(2+) site is built by His-173 and His-248. Lys-305 is modified (N6-acetyllysine). Tyr-306 bears the Phosphotyrosine mark. The tract at residues 306 to 330 is disordered; sequence YGQFSGLNPGGRPITPPRNSAKAKK. At Thr-320 the chain carries Phosphothreonine. At Ser-325 the chain carries Phosphoserine.

It belongs to the PPP phosphatase family. PP-1 subfamily. In terms of assembly, PP1 comprises a catalytic subunit, PPP1CA, PPP1CB or PPP1CC, which is folded into its native form by inhibitor 2 and glycogen synthetase kinase 3, and then complexed to one or several targeting or regulatory subunits. PPP1R12A, PPP1R12B and PPP1R12C mediate binding to myosin. PPP1R3A (in skeletal muscle), PPP1R3B (in liver), PPP1R3C, PPP1R3D and PPP1R3F (in brain) mediate binding to glycogen. Interacts with PPP1R15A and PPP1R15B; the interactions mediate binding to EIF2S1. Part of a complex containing PPP1R15B, PP1 and NCK1/2. Interacts with PPP1R9A, PPP1R9B and PPP1R7. Interacts with YLPM1. Forms a complex with ILF2, ILF3, YLPM1, KHDRBS1, RBMX and NCOA5. Interacts with NOM1 and PPP1R8. Interacts with PPP1R16B. Interacts with RPSA only in the presence of PPP1R16B. Component of the PNUTS-PP1 phosphatase complex, composed of PPP1R10/PNUTS, TOX4, WDR82, and PPP1CA or PPP1CB or PPP1CC. Interacts with PPP1R10/PNUTS and PPP1R8. Interacts with WDR82 in the presence of PPP1R10/PNUTS. Interacts with PPP1R39. transition from mitosis into interphase. Interacts with TRIM28; the interaction dephosphorylates TRIM28 on 'Ser-824' and forms a complex at the p21 promoter site. Interacts with NEK2. Interacts with PHACTR4; which acts as an activator of PP1 activity. Interacts with FER; this promotes phosphorylation at Thr-320. Interacts with BTBD10. Interacts with KCTD20. Interacts with FOXP3. Interacts with CENPA. Interacts with ATG16L1. Found in a complex with PPP1CA, PPP1CC, SHC1 and PEAK1. Interacts with tensin TNS1. Interacts with SAXO4, PPP1R21, PPP1R26, PPP1R27, PPP1R35, PPP1R36, PPP1R37, SH3RF2, ELFN1 and ELFN2. Interacts with TPRN; the interaction results in inhibition of PPC1A phosphatase activity. Interacts with SKA1 (via C-terminus); the interaction is direct and required for the recruitment of PP1 to the kinetochore. Interacts with the KNL1 complex subunit KNL1; the interaction is direct and mutually exclusive with KNL1 binding to microtubules. Component of the SHOC2-MRAS-PP1c (SMP) complex consisting of SHOC2, GTP-bound M-Ras/MRAS and the catalytic subunit of protein phosphatase 1 (either PPP1CA, PPP1CB or PPP1CC). SHOC2 and PP1c preferably bind M-Ras/MRAS, but they also bind K-Ras/KRAS, N-Ras/NRAS and H-Ras/HRAS; these interactions are GTP-dependent and both SHOC2 and PP1c are required to form a stable complex. Interacts with SHOC2 in the absence of Ras GTPases. Mn(2+) serves as cofactor. In terms of processing, phosphorylated. Dephosphorylated at Thr-320 in the presence of ionizing radiation.

It localises to the cytoplasm. The protein resides in the nucleus. Its subcellular location is the nucleoplasm. It is found in the nucleolus. The enzyme catalyses O-phospho-L-seryl-[protein] + H2O = L-seryl-[protein] + phosphate. It carries out the reaction O-phospho-L-threonyl-[protein] + H2O = L-threonyl-[protein] + phosphate. In terms of biological role, protein phosphatase that associates with over 200 regulatory proteins to form highly specific holoenzymes which dephosphorylate hundreds of biological targets. Protein phosphatase 1 (PP1) is essential for cell division, transcription elongation, and participates in the regulation of glycogen metabolism, muscle contractility and protein synthesis. Involved in regulation of ionic conductances and long-term synaptic plasticity. May play an important role in dephosphorylating substrates such as the postsynaptic density-associated Ca(2+)/calmodulin dependent protein kinase II. Catalytic component of the PNUTS-PP1 protein phosphatase complex, a protein phosphatase 1 (PP1) complex that promotes RNA polymerase II transcription pause-release, allowing transcription elongation: the PNUTS-PP1 complex mediates the release of RNA polymerase II from promoter-proximal region of genes by catalyzing dephosphorylation of proteins involved in transcription, such as AFF4, CDK9, MEPCE, INTS12, NCBP1, POLR2M/GDOWN1 and SUPT6H. The PNUTS-PP1 complex also regulates transcription termination by mediating dephosphorylation of SUPT5H in termination zones downstream of poly(A) sites, thereby promoting deceleration of RNA polymerase II transcription. PNUTS-PP1 complex is also involved in the response to replication stress by mediating dephosphorylation of POLR2A at 'Ser-5' of the CTD, promoting RNA polymerase II degradation. PNUTS-PP1 also plays a role in the control of chromatin structure and cell cycle progression during the transition from mitosis into interphase. Regulates NEK2 function in terms of kinase activity and centrosome number and splitting, both in the presence and absence of radiation-induced DNA damage. Regulator of neural tube and optic fissure closure, and enteric neural crest cell (ENCCs) migration during development. In balance with CSNK1D and CSNK1E, determines the circadian period length, through the regulation of the speed and rhythmicity of PER1 and PER2 phosphorylation. May dephosphorylate CSNK1D and CSNK1E. Dephosphorylates the 'Ser-418' residue of FOXP3 in regulatory T-cells (Treg) from patients with rheumatoid arthritis, thereby inactivating FOXP3 and rendering Treg cells functionally defective. Dephosphorylates CENPA. Dephosphorylates the 'Ser-139' residue of ATG16L1 causing dissociation of ATG12-ATG5-ATG16L1 complex, thereby inhibiting autophagy. Together with PPP1CC (PP1-gamma subunit), dephosphorylates IFIH1/MDA5 and RIG-I leading to their activation and a functional innate immune response. Core component of the SHOC2-MRAS-PP1c (SMP) holophosphatase complex that regulates the MAPK pathway activation. The SMP complex specifically dephosphorylates the inhibitory phosphorylation at 'Ser-259' of RAF1 kinase, 'Ser-365' of BRAF kinase and 'Ser-214' of ARAF kinase, stimulating their kinase activities. The SMP complex enhances the dephosphorylation activity and substrate specificity of PP1c. This chain is Serine/threonine-protein phosphatase PP1-alpha catalytic subunit (PPP1CA), found in Canis lupus familiaris (Dog).